The primary structure comprises 448 residues: Exodeoxyribonuclease 7 large subunit (448 aa).

This sequence belongs to the XseA family. Heterooligomer composed of large and small subunits.

It localises to the cytoplasm. The catalysed reaction is Exonucleolytic cleavage in either 5'- to 3'- or 3'- to 5'-direction to yield nucleoside 5'-phosphates.. Its function is as follows. Bidirectionally degrades single-stranded DNA into large acid-insoluble oligonucleotides, which are then degraded further into small acid-soluble oligonucleotides. The polypeptide is Exodeoxyribonuclease 7 large subunit (Tolumonas auensis (strain DSM 9187 / NBRC 110442 / TA 4)).